A 370-amino-acid chain; its full sequence is N-acetyltaurine hydrolase (370 aa).

Residues His-26, His-28, Glu-189, His-221, His-250, and Asp-318 each contribute to the a divalent metal cation site.

This sequence belongs to the metallo-dependent hydrolases superfamily. Phosphotriesterase family. It depends on a divalent metal cation as a cofactor.

It is found in the cytoplasm. It localises to the cytosol. The catalysed reaction is N-acetyltaurine + H2O = taurine + acetate. N-acetyltaurine hydrolase catalyzes the hydrolysis of N-acetyltaurine into taurine and acetate. The protein is N-acetyltaurine hydrolase (pter) of Dictyostelium discoideum (Social amoeba).